The following is a 423-amino-acid chain: Protein phosphatase 2C 77 (423 aa).

The tract at residues Gly74–Val95 is disordered. The 300-residue stretch at Leu112–Leu411 folds into the PPM-type phosphatase domain. Residues Asp165, Asp251, and Ser252 each contribute to the Mg(2+) site. Cysteines 257 and 331 form a disulfide. Residues Asp337 and Asp402 each contribute to the Mg(2+) site.

It belongs to the PP2C family. In terms of assembly, interacts with SPK1, CIPK15/PKS3, GPX3, SCAR1, SCAR2, SCAR3 and SCARL. Also interacts with CIPK24/SOS2. Binds to the fibrillin precursor protein. Interacts with ABA-bounded PYR1, PYL1, PYL2, PYL3, PYL4, PYL5, PYL6, PYL8 and PYL9, and with free PYL2, PYL3 and PYL4. Interacts with and represses GHR1, and, to a lesser extent, SRK2E/OST1. Mg(2+) serves as cofactor. Mn(2+) is required as a cofactor.

It carries out the reaction O-phospho-L-seryl-[protein] + H2O = L-seryl-[protein] + phosphate. The enzyme catalyses O-phospho-L-threonyl-[protein] + H2O = L-threonyl-[protein] + phosphate. Its activity is regulated as follows. Phosphatase activity repressed by oxidized ATGPX3, free fatty acids (e.g. arachidonic acid (20:4) and Linolenic acid (18:3)) and by H(2)O(2). Repressed by PYR/PYL/RCAR ABA receptors in an ABA-dependent manner. Functionally, repressor of the abscisic acid (ABA) signaling pathway that regulates numerous ABA responses, such as stomatal closure, osmotic water permeability of the plasma membrane (Pos), high light stress, response to glucose, seed germination and inhibition of vegetative growth. During the stomatal closure regulation, modulates the inward calcium-channel permeability as well as H(2)O(2) and oxidative burst in response to ABA and dehydration. Represses GHR1 and, to some extent, SRK2E/OST1, kinases involved in the regulation of SLAC1-dependent stomatal closure. Controls negatively fibrillin that is involved in mediating ABA-induced photoprotection. May be implicated in ABA content regulation. Involved in acquired thermotolerance of root growth and seedling survival. Required for the Erwinia amylovora harpin-induced (HrpN) drought tolerance. Involved in the hydrotropic response. In Arabidopsis thaliana (Mouse-ear cress), this protein is Protein phosphatase 2C 77.